The primary structure comprises 293 residues: Formamidopyrimidine-DNA glycosylase (293 aa).

Pro-2 (schiff-base intermediate with DNA) is an active-site residue. The active-site Proton donor is the Glu-3. The active-site Proton donor; for beta-elimination activity is Lys-60. His-110, Arg-129, and Arg-174 together coordinate DNA. Residues 259–293 form an FPG-type zinc finger; the sequence is NVYRRTGKECRKCGNLIEKQKIAGRSTHWCPNCQK. Catalysis depends on Arg-283, which acts as the Proton donor; for delta-elimination activity.

This sequence belongs to the FPG family. As to quaternary structure, monomer. Zn(2+) is required as a cofactor.

The catalysed reaction is Hydrolysis of DNA containing ring-opened 7-methylguanine residues, releasing 2,6-diamino-4-hydroxy-5-(N-methyl)formamidopyrimidine.. It carries out the reaction 2'-deoxyribonucleotide-(2'-deoxyribose 5'-phosphate)-2'-deoxyribonucleotide-DNA = a 3'-end 2'-deoxyribonucleotide-(2,3-dehydro-2,3-deoxyribose 5'-phosphate)-DNA + a 5'-end 5'-phospho-2'-deoxyribonucleoside-DNA + H(+). Its function is as follows. Involved in base excision repair of DNA damaged by oxidation or by mutagenic agents. Acts as a DNA glycosylase that recognizes and removes damaged bases. Has a preference for oxidized purines, such as 7,8-dihydro-8-oxoguanine (8-oxoG). Has AP (apurinic/apyrimidinic) lyase activity and introduces nicks in the DNA strand. Cleaves the DNA backbone by beta-delta elimination to generate a single-strand break at the site of the removed base with both 3'- and 5'-phosphates. This chain is Formamidopyrimidine-DNA glycosylase, found in Prochlorococcus marinus (strain MIT 9312).